Here is a 122-residue protein sequence, read N- to C-terminus: Serum amyloid A-1 protein (122 aa).

The signal sequence occupies residues 1 to 18 (MKPFVAIIFCFLILGVDS). The important for amyloid formation stretch occupies residues 19–45 (QRWFQFMKEAGQGTRDMWRAYTDMREA). The disordered stretch occupies residues 100–122 (ANEWGRSGKDPNFFRPPGLPSKY).

Belongs to the SAA family. In terms of assembly, homohexamer; dimer of trimers. Can form amyloid fibrils after partial proteolysis; the native, undenatured protein does not form amyloid fibrils (in vitro). Apolipoprotein of the HDL complex. Binds to heparin. In terms of tissue distribution, detected in liver, spleen and kidney.

The protein localises to the secreted. Major acute phase protein. The sequence is that of Serum amyloid A-1 protein (SAA1) from Mesocricetus auratus (Golden hamster).